Consider the following 142-residue polypeptide: Transcriptional regulator MraZ (142 aa).

SpoVT-AbrB domains are found at residues 5 to 51 (SSAL…PRPE) and 77 to 120 (AQDV…DAAS).

It belongs to the MraZ family. In terms of assembly, forms oligomers.

It localises to the cytoplasm. It is found in the nucleoid. This chain is Transcriptional regulator MraZ, found in Bordetella bronchiseptica (strain ATCC BAA-588 / NCTC 13252 / RB50) (Alcaligenes bronchisepticus).